The primary structure comprises 249 residues: Probable transcriptional regulatory protein AB57_1731 (249 aa).

The protein belongs to the TACO1 family.

It is found in the cytoplasm. The chain is Probable transcriptional regulatory protein AB57_1731 from Acinetobacter baumannii (strain AB0057).